Reading from the N-terminus, the 259-residue chain is Thiazole synthase (259 aa).

Catalysis depends on K100, which acts as the Schiff-base intermediate with DXP. 1-deoxy-D-xylulose 5-phosphate contacts are provided by residues G161, A187 to G188, and N209 to T210.

The protein belongs to the ThiG family. In terms of assembly, homotetramer. Forms heterodimers with either ThiH or ThiS.

The protein resides in the cytoplasm. It carries out the reaction [ThiS sulfur-carrier protein]-C-terminal-Gly-aminoethanethioate + 2-iminoacetate + 1-deoxy-D-xylulose 5-phosphate = [ThiS sulfur-carrier protein]-C-terminal Gly-Gly + 2-[(2R,5Z)-2-carboxy-4-methylthiazol-5(2H)-ylidene]ethyl phosphate + 2 H2O + H(+). It functions in the pathway cofactor biosynthesis; thiamine diphosphate biosynthesis. Catalyzes the rearrangement of 1-deoxy-D-xylulose 5-phosphate (DXP) to produce the thiazole phosphate moiety of thiamine. Sulfur is provided by the thiocarboxylate moiety of the carrier protein ThiS. In vitro, sulfur can be provided by H(2)S. The polypeptide is Thiazole synthase (Halalkalibacterium halodurans (strain ATCC BAA-125 / DSM 18197 / FERM 7344 / JCM 9153 / C-125) (Bacillus halodurans)).